The primary structure comprises 166 residues: Endoribonuclease YbeY (166 aa).

The Zn(2+) site is built by His129, His133, and His139.

Belongs to the endoribonuclease YbeY family. Zn(2+) is required as a cofactor.

It is found in the cytoplasm. Functionally, single strand-specific metallo-endoribonuclease involved in late-stage 70S ribosome quality control and in maturation of the 3' terminus of the 16S rRNA. In Mesorhizobium japonicum (strain LMG 29417 / CECT 9101 / MAFF 303099) (Mesorhizobium loti (strain MAFF 303099)), this protein is Endoribonuclease YbeY.